Reading from the N-terminus, the 134-residue chain is uncharacterized protein (134 aa).

Residues 4 to 24 (NLLILLSLLLVVVAIMWWLYE) form a helical membrane-spanning segment.

Its subcellular location is the membrane. This is an uncharacterized protein from Invertebrate iridescent virus 6 (IIV-6).